Reading from the N-terminus, the 485-residue chain is 1-aminocyclopropane-1-carboxylate synthase 2 (485 aa).

The substrate site is built by Glu55 and Tyr92. At Lys278 the chain carries N6-(pyridoxal phosphate)lysine. Ser460 bears the Phosphoserine mark.

The protein belongs to the class-I pyridoxal-phosphate-dependent aminotransferase family. As to quaternary structure, homodimer and heterodimer. In vivo, the relevance of heterodimerization with other ACS enzymes is however unsure. It depends on pyridoxal 5'-phosphate as a cofactor. Post-translationally, phosphorylated on Ser 460; phosphorylation may regulate its turnover. In terms of processing, may be processed at its C-terminus.

It catalyses the reaction S-adenosyl-L-methionine = 1-aminocyclopropane-1-carboxylate + S-methyl-5'-thioadenosine + H(+). It participates in alkene biosynthesis; ethylene biosynthesis via S-adenosyl-L-methionine; ethylene from S-adenosyl-L-methionine: step 1/2. In terms of biological role, 1-aminocyclopropane-1-carboxylate synthase (ACS) enzymes catalyze the conversion of S-adenosyl-L-methionine (SAM) into 1-aminocyclopropane-1-carboxylate (ACC), a direct precursor of ethylene. The sequence is that of 1-aminocyclopropane-1-carboxylate synthase 2 (ACS2) from Solanum lycopersicum (Tomato).